A 172-amino-acid chain; its full sequence is Chromosome-anchoring protein RacA (172 aa).

Positions 5 to 25 form a DNA-binding region, H-T-H motif; sequence TSDVAIRLGVSPKTIQRWVRK. 2 disordered regions span residues 57–76 and 142–172; these read AAME…RNNI and QLNN…GLFA. The span at 62 to 71 shows a compositional bias: pro residues; it reads PPTPKRPPTP. A coiled-coil region spans residues 83-146; that stretch reads ESIEPEIARV…ARLEQQLNNR (64 aa). Residues 142–151 are compositionally biased toward polar residues; sequence QLNNRPPSSH.

The protein belongs to the RacA family.

Its subcellular location is the cytoplasm. Its function is as follows. Required for the formation of axial filaments and for anchoring the origin regions at the cell poles in sporulating cells, thus ensuring proper chromosome segregation in the prespore. Binds in a dispersed manner throughout the chromosome but preferentially to sites clustered in the origin portion of the chromosome, causing condensation of the chromosome and its remodeling into an elongated, anchored structure. In Geobacillus kaustophilus (strain HTA426), this protein is Chromosome-anchoring protein RacA.